Here is a 198-residue protein sequence, read N- to C-terminus: Ribonuclease HII (198 aa).

Residues 2 to 192 (MYYCGIDEAG…IKKIIDNQKN (191 aa)) form the RNase H type-2 domain. A divalent metal cation-binding residues include aspartate 8, glutamate 9, and aspartate 101.

Belongs to the RNase HII family. Mn(2+) serves as cofactor. The cofactor is Mg(2+).

Its subcellular location is the cytoplasm. It catalyses the reaction Endonucleolytic cleavage to 5'-phosphomonoester.. In terms of biological role, endonuclease that specifically degrades the RNA of RNA-DNA hybrids. This is Ribonuclease HII from Natranaerobius thermophilus (strain ATCC BAA-1301 / DSM 18059 / JW/NM-WN-LF).